Reading from the N-terminus, the 176-residue chain is NAD(P)H-quinone oxidoreductase subunit 6, chloroplastic (176 aa).

A run of 5 helical transmembrane segments spans residues phenylalanine 10–threonine 30, isoleucine 33–alanine 53, alanine 61–methionine 81, leucine 92–isoleucine 112, and phenylalanine 152–alanine 172.

It belongs to the complex I subunit 6 family. As to quaternary structure, NDH is composed of at least 16 different subunits, 5 of which are encoded in the nucleus.

The protein resides in the plastid. Its subcellular location is the chloroplast thylakoid membrane. The enzyme catalyses a plastoquinone + NADH + (n+1) H(+)(in) = a plastoquinol + NAD(+) + n H(+)(out). The catalysed reaction is a plastoquinone + NADPH + (n+1) H(+)(in) = a plastoquinol + NADP(+) + n H(+)(out). In terms of biological role, NDH shuttles electrons from NAD(P)H:plastoquinone, via FMN and iron-sulfur (Fe-S) centers, to quinones in the photosynthetic chain and possibly in a chloroplast respiratory chain. The immediate electron acceptor for the enzyme in this species is believed to be plastoquinone. Couples the redox reaction to proton translocation, and thus conserves the redox energy in a proton gradient. This chain is NAD(P)H-quinone oxidoreductase subunit 6, chloroplastic (ndhG), found in Nandina domestica (Heavenly bamboo).